A 427-amino-acid chain; its full sequence is Interferon regulatory factor 3 (427 aa).

Threonine 3 carries the phosphothreonine modification. The segment at residues 5–111 (KPRILPWLVS…DPHKIYEFVN (107 aa)) is a DNA-binding region (IRF tryptophan pentad repeat). Serine 14 is modified (phosphoserine). The residue at position 75 (threonine 75) is a Phosphothreonine. A compositionally biased stretch (basic and acidic residues) spans 91–107 (RLAEDRSKDPHDPHKIY). The disordered stretch occupies residues 91–136 (RLAEDRSKDPHDPHKIYEFVNSGVGDFSQPDTSPDTNGGGSTSDTQ). Phosphoserine is present on residues serine 97 and serine 123. The Nuclear export signal motif lies at 139-149 (ILDELLGNMVL). The tract at residues 141–427 (DELLGNMVLA…GMDFQGPGES (287 aa)) is mediates interaction with ZDHHC11. Serine 175 carries the (Microbial infection) Phosphoserine modification. Residue threonine 180 is modified to Phosphothreonine. Serine 188 carries the post-translational modification Phosphoserine. A Glycyl lysine isopeptide (Lys-Gly) (interchain with G-Cter in ISG15) cross-link involves residue lysine 193. Residues 200–360 (EEWEFEVTAF…SWPQDQPWTK (161 aa)) are interaction with HERC5. A phosphothreonine mark is found at threonine 237, threonine 244, and threonine 253. Cysteines 267 and 289 form a disulfide. Glycyl lysine isopeptide (Lys-Gly) (interchain with G-Cter in ISG15) cross-links involve residues lysine 360 and lysine 366. Lysine 366 bears the N6-acetyllysine mark. Serine 385 bears the Phosphoserine mark. A Diphosphoserine modification is found at serine 386. Serine 386 carries the post-translational modification Phosphoserine; by TBK1. Serine 396 carries the post-translational modification Phosphoserine; by IKKE and TBK1. The residue at position 398 (serine 398) is a Phosphoserine. Phosphothreonine is present on threonine 404. Serine 427 carries the phosphoserine modification.

This sequence belongs to the IRF family. In terms of assembly, monomer. Homodimer; phosphorylation-induced. Interacts (when phosphorylated) with CREBBP. Interacts with MAVS (via phosphorylated pLxIS motif). Interacts with TICAM1 (via phosphorylated pLxIS motif). Interacts with STING1 (via phosphorylated pLxIS motif). Interacts with IKBKE and TBK1. Interacts with TICAM2. Interacts with RBCK1. Interacts with HERC5. Interacts with DDX3X (phosphorylated at 'Ser-102'); the interaction allows the phosphorylation and activation of IRF3 by IKBKE. Interacts with TRIM21 and ULK1, in the presence of TRIM21; this interaction leads to IRF3 degradation by autophagy. Interacts with RIOK3; RIOK3 probably mediates the interaction of TBK1 with IRF3. Interacts with ILRUN; the interaction inhibits IRF3 binding to its DNA consensus sequence. Interacts with LYAR; this interaction impairs IRF3 DNA-binding activity. Interacts with TRAF3. Interacts with ZDHHC11; ZDHHC11 recruits IRF3 to STING1 upon DNA virus infection and thereby promotes IRF3 activation. Interacts with HSP90AA1; the interaction mediates IRF3 association with TOMM70. Interacts with BCL2; the interaction decreases upon Sendai virus infection. Interacts with BAX; the interaction is direct, increases upon Sendai virus infection and mediates the formation of the apoptosis complex TOMM70:HSP90AA1:IRF3:BAX. Interacts with DDX56. Interacts with NBR1. (Microbial infection) Interacts with rotavirus A NSP1 (via pLxIS motif); this interaction leads to the proteasome-dependent degradation of IRF3. As to quaternary structure, (Microbial infection) Interacts with herpes virus 8/HHV-8 protein VIRF1. In terms of assembly, (Microbial infection) Interacts with Seneca Valley virus protease 3C; this interaction is involved in the suppression of IRF3 expression and phosphorylation by the virus. (Microbial infection) Interacts with herpes virus 2/HHV-2 protein ICP27; this interaction inhibits IRF3 phosphorylation and nuclear translocation. As to quaternary structure, (Microbial infection) Interacts with human cytomegalovirus protein UL44; this interaction prevents IRF3 binding to its promoters. In terms of assembly, (Microbial infection) Interacts with the two fragments of MERS-COV protein N produced by CASP6 through proteolytic cleavage; both interactions inhibit IRF3 nuclear translocation after activation and IFN signaling. Post-translationally, constitutively phosphorylated on many Ser/Thr residues. Activated following phosphorylation by TBK1 and IKBKE. Innate adapter proteins, such as MAVS, STING1 or TICAM1, are first activated by viral RNA, cytosolic DNA, and bacterial lipopolysaccharide (LPS), respectively, leading to activation of the kinases TBK1 and IKBKE. These kinases then phosphorylate the adapter proteins on the pLxIS motif, leading to recruitment of IRF3, thereby licensing IRF3 for phosphorylation by TBK1. Phosphorylation at Ser-386 is followed by pyrophosphorylation at the same residue, promoting phosphorylation at Ser-396. Phosphorylated IRF3 dissociates from the adapter proteins, dimerizes, and then enters the nucleus to induce IFNs. In terms of processing, pyrophosphorylated by UAP1 following phosphorylation at Ser-386 by TBK1. Pyrophosphorylation promotes subsequent phosphorylation at Ser-396, leading to homodimerization of IRF3. Acetylation at Lys-366 by KAT8 inhibits recruimtent to promoters and transcription factor activity. Acetylation by KAT8 is promoted by phosphorylation at Ser-396. Post-translationally, ubiquitinated; ubiquitination involves RBCK1 leading to proteasomal degradation. Polyubiquitinated; ubiquitination involves TRIM21 leading to proteasomal degradation. Ubiquitinated by UBE3C, leading to its degradation. Deubiquitinated by USP5 on both 'Lys-48'-linked unanchored and 'Lys-63'-linked anchored polyubiquitin, leading to inhibition of anti-RNA viral innate immunity. In terms of processing, ISGylated by HERC5 resulting in sustained IRF3 activation and in the inhibition of IRF3 ubiquitination by disrupting PIN1 binding. The phosphorylation state of IRF3 does not alter ISGylation. Proteolytically cleaved by apoptotic caspases during apoptosis, leading to its inactivation. Cleavage by CASP3 during virus-induced apoptosis inactivates it, preventing cytokine overproduction. Post-translationally, (Microbial infection) ISGylated. ISGylation is cleaved and removed by SARS-COV-2 nsp3 which attenuates type I interferon responses. In terms of processing, (Microbial infection) Phosphorylation and subsequent activation of IRF3 is inhibited by vaccinia virus protein E3. (Microbial infection) Phosphorylated by herpes simplex virus 1/HHV-1 US3 at Ser-175 to prevent IRF3 activation. Expressed constitutively in a variety of tissues.

The protein localises to the cytoplasm. It is found in the nucleus. It localises to the mitochondrion. With respect to regulation, in the absence of viral infection, maintained as a monomer in an autoinhibited state. Phosphorylation by TBK1 and IKBKE disrupts this autoinhibition leading to the liberation of the DNA-binding and dimerization activities and its nuclear localization where it can activate type I IFN and ISG genes. Phosphorylation and activation follow the following steps: innate adapter proteins, such as MAVS, STING1 or TICAM1, are first activated by viral RNA, cytosolic DNA and bacterial lipopolysaccharide (LPS), respectively, leading to activation of the kinases TBK1 and IKBKE. These kinases then phosphorylate the adapter proteins on their pLxIS motif, leading to recruitment of IRF3, thereby licensing IRF3 for phosphorylation by TBK1. Phosphorylated IRF3 dissociates from the adapter proteins, dimerizes, and then enters the nucleus to induce IFNs. (Microbial infection) Activated upon coronavirus SARS-CoV-2 infection. Key transcriptional regulator of type I interferon (IFN)-dependent immune responses which plays a critical role in the innate immune response against DNA and RNA viruses. Regulates the transcription of type I IFN genes (IFN-alpha and IFN-beta) and IFN-stimulated genes (ISG) by binding to an interferon-stimulated response element (ISRE) in their promoters. Acts as a more potent activator of the IFN-beta (IFNB) gene than the IFN-alpha (IFNA) gene and plays a critical role in both the early and late phases of the IFNA/B gene induction. Found in an inactive form in the cytoplasm of uninfected cells and following viral infection, double-stranded RNA (dsRNA), or toll-like receptor (TLR) signaling, is phosphorylated by IKBKE and TBK1 kinases. This induces a conformational change, leading to its dimerization and nuclear localization and association with CREB binding protein (CREBBP) to form dsRNA-activated factor 1 (DRAF1), a complex which activates the transcription of the type I IFN and ISG genes. Can activate distinct gene expression programs in macrophages and can induce significant apoptosis in primary macrophages. In response to Sendai virus infection, is recruited by TOMM70:HSP90AA1 to mitochondrion and forms an apoptosis complex TOMM70:HSP90AA1:IRF3:BAX inducing apoptosis. Key transcription factor regulating the IFN response during SARS-CoV-2 infection. This is Interferon regulatory factor 3 from Homo sapiens (Human).